Reading from the N-terminus, the 184-residue chain is MNKGNLIKNYAVALFNNAIVDNIQDKIFEEITSINRIITDNFDIREFLFSPIVNKNDKINAVNSLAKNIKISTIVQNFLLLLVKNSRTAILSNIVDAYNTLLYESKNIKIVQVISANKLQPKEQEWIKSRIEKELNQKTEILFDIDNTIIGGIVIKYDSMLQDYSIKGSLEKITKALKTVNIAV.

The protein belongs to the ATPase delta chain family. As to quaternary structure, F-type ATPases have 2 components, F(1) - the catalytic core - and F(0) - the membrane proton channel. F(1) has five subunits: alpha(3), beta(3), gamma(1), delta(1), epsilon(1). F(0) has three main subunits: a(1), b(2) and c(10-14). The alpha and beta chains form an alternating ring which encloses part of the gamma chain. F(1) is attached to F(0) by a central stalk formed by the gamma and epsilon chains, while a peripheral stalk is formed by the delta and b chains.

The protein localises to the cell inner membrane. Its function is as follows. F(1)F(0) ATP synthase produces ATP from ADP in the presence of a proton or sodium gradient. F-type ATPases consist of two structural domains, F(1) containing the extramembraneous catalytic core and F(0) containing the membrane proton channel, linked together by a central stalk and a peripheral stalk. During catalysis, ATP synthesis in the catalytic domain of F(1) is coupled via a rotary mechanism of the central stalk subunits to proton translocation. In terms of biological role, this protein is part of the stalk that links CF(0) to CF(1). It either transmits conformational changes from CF(0) to CF(1) or is implicated in proton conduction. This is ATP synthase subunit delta from Rickettsia rickettsii (strain Iowa).